We begin with the raw amino-acid sequence, 216 residues long: Ras-related protein RABE1a (216 aa).

22 to 29 (GDSGVGKS) contributes to the GTP binding site. The short motif at 44–52 (FITTIGIDF) is the Effector region element. GTP is bound by residues 70-74 (DTAGQ), 128-131 (NKAD), and 159-160 (SA). Residues 185 to 216 (DARAEPQTIKINQSDQGAGTSQATQKSACCGT) are disordered. The span at 193–216 (IKINQSDQGAGTSQATQKSACCGT) shows a compositional bias: polar residues. 2 S-geranylgeranyl cysteine lipidation sites follow: Cys-213 and Cys-214.

Belongs to the small GTPase superfamily. Rab family. As to quaternary structure, interacts with PI5K2.

It localises to the golgi apparatus membrane. The protein localises to the cell membrane. Its function is as follows. Involved in membrane trafficking from the Golgi to the plasma membrane. The sequence is that of Ras-related protein RABE1a (RABE1A) from Arabidopsis thaliana (Mouse-ear cress).